The chain runs to 488 residues: Prostaglandin E2 receptor EP4 subtype (488 aa).

Topologically, residues 1–19 are extracellular; that stretch reads MSIPGVNASFSSTPERLNS. N-linked (GlcNAc...) asparagine glycosylation is present at N7. The chain crosses the membrane as a helical span at residues 20–43; the sequence is PVTIPAVMFIFGVVGNLVAIVVLC. Residues 44-55 lie on the Cytoplasmic side of the membrane; the sequence is KSRKEQKETTFY. Residues 56–79 form a helical membrane-spanning segment; sequence TLVCGLAVTDLLGTLLVSPVTIAT. Residues 80–96 are Extracellular-facing; it reads YMKGQWPGDQALCDYST. Cysteines 92 and 170 form a disulfide. The chain crosses the membrane as a helical span at residues 97–115; it reads FILLFFGLSGLSIICAMSI. Topologically, residues 116-135 are cytoplasmic; it reads ERYLAINHAYFYSHYVDKRL. The chain crosses the membrane as a helical span at residues 136–160; sequence AGLTLFAVYASNVLFCALPNMGLGR. The Extracellular portion of the chain corresponds to 161–184; the sequence is SERQYPGTWCFIDWTTNVTAYAAF. The helical transmembrane segment at 185–211 threads the bilayer; it reads SYMYAGFSSFLILATVLCNVLVCGALL. At 212 to 270 the chain is on the cytoplasmic side; that stretch reads RMLRQFMRRTSLGTEQHHAAAAAAVASVACRGHAAASPALQRLSDFRRRRSFRRIAGAE. The chain crosses the membrane as a helical span at residues 271–298; it reads IQMVILLIATSLVVLICSIPLVVRVFIN. Over 299–315 the chain is Extracellular; it reads QLYQPSVVKDISRNPDL. The chain crosses the membrane as a helical span at residues 316 to 335; that stretch reads QAIRIASVNPILDPWIYILL. The Cytoplasmic segment spans residues 336-488; the sequence is RKTVLSKAIE…ETLKLSEKCI (153 aa). The segment at 358 to 380 is disordered; sequence GRDGSAQHCSESRRTSSAMSGHS. Phosphoserine is present on residues S377, S380, S382, and S385.

This sequence belongs to the G-protein coupled receptor 1 family. In terms of assembly, interacts with FEM1A. Post-translationally, phosphorylation mediates agonist-mediated desensitization by promoting cytoplasmic retention.

The protein resides in the cell membrane. Its function is as follows. Receptor for prostaglandin E2 (PGE2). The activity of this receptor is mediated by G(s) proteins that stimulate adenylate cyclase. Has a relaxing effect on smooth muscle. May play an important role in regulating renal hemodynamics, intestinal epithelial transport, adrenal aldosterone secretion, and uterine function. The protein is Prostaglandin E2 receptor EP4 subtype (Ptger4) of Rattus norvegicus (Rat).